A 575-amino-acid polypeptide reads, in one-letter code: Triokinase/FMN cyclase (575 aa).

Residues 9–336 (SVAGCADDAL…IDAETTAAAW (328 aa)) enclose the DhaK domain. Residues 56–59 (GSGH), K109, and D114 each bind dihydroxyacetone. Catalysis depends on H221, which acts as the Tele-hemiaminal-histidine intermediate. Residues 348-367 (KRSRVAPAEPQEAPDSTAAG) are disordered. A Phosphoserine modification is found at S350. Residues 372–571 (KRMALVLERV…AAAILRAILE (200 aa)) enclose the DhaL domain. ATP contacts are provided by residues 401-404 (DGDC), 446-447 (SS), G486, and 494-495 (TM). S511 and S545 each carry phosphoserine. Residue 556–558 (DPG) participates in ATP binding.

The protein belongs to the dihydroxyacetone kinase (DAK) family. As to quaternary structure, homodimer. Interacts with IFIH1 (via the CARD domains), the interaction is inhibited by viral infection. Requires Mg(2+) as cofactor. The cofactor is Mn(2+). Co(2+) is required as a cofactor. In terms of tissue distribution, detected in erythrocytes (at protein level).

The catalysed reaction is dihydroxyacetone + ATP = dihydroxyacetone phosphate + ADP + H(+). The enzyme catalyses D-glyceraldehyde + ATP = D-glyceraldehyde 3-phosphate + ADP + H(+). It catalyses the reaction FAD = riboflavin cyclic-4',5'-phosphate + AMP + H(+). Each activity is inhibited by the substrate(s) of the other. Its function is as follows. Catalyzes both the phosphorylation of dihydroxyacetone and of glyceraldehyde, and the splitting of ribonucleoside diphosphate-X compounds among which FAD is the best substrate. Represses IFIH1-mediated cellular antiviral response. The polypeptide is Triokinase/FMN cyclase (Homo sapiens (Human)).